A 266-amino-acid polypeptide reads, in one-letter code: Zinc finger protein CG30 (266 aa).

Residues 8-63 (CNICFSVAEIKNYFMQPIDRLTMIPVLELDTCKHQLCSMCIRKIRKRKKTPCPLCR) form an RING-type zinc finger.

The protein resides in the host nucleus. In terms of biological role, plays a role in the proper expression of late and very late genes. The polypeptide is Zinc finger protein CG30 (CG30) (Bombyx mori nuclear polyhedrosis virus (BmNPV)).